The primary structure comprises 199 residues: Recombination protein RecR (199 aa).

A C4-type zinc finger spans residues 57–72; the sequence is CRSCRTFTEESHCPIC. One can recognise a Toprim domain in the interval 81–176; sequence EQICVVETPA…SVSRIAHGVP (96 aa).

It belongs to the RecR family.

Its function is as follows. May play a role in DNA repair. It seems to be involved in an RecBC-independent recombinational process of DNA repair. It may act with RecF and RecO. This Shewanella sediminis (strain HAW-EB3) protein is Recombination protein RecR.